We begin with the raw amino-acid sequence, 182 residues long: uncharacterized protein (182 aa).

A Nudix hydrolase domain is found at 36 to 164 (LRHRATYIVV…TPDSLKALSL (129 aa)). The Nudix box signature appears at 73 to 95 (GGVVQSGENYLESARREAEEELG). Mg(2+) contacts are provided by Glu89 and Glu93.

Belongs to the Nudix hydrolase family. Requires Mg(2+) as cofactor.

This is an uncharacterized protein from Yersinia pestis.